Reading from the N-terminus, the 105-residue chain is Pyrimidine/purine nucleoside phosphorylase (105 aa).

This sequence belongs to the nucleoside phosphorylase PpnP family.

The enzyme catalyses a purine D-ribonucleoside + phosphate = a purine nucleobase + alpha-D-ribose 1-phosphate. The catalysed reaction is adenosine + phosphate = alpha-D-ribose 1-phosphate + adenine. It catalyses the reaction cytidine + phosphate = cytosine + alpha-D-ribose 1-phosphate. It carries out the reaction guanosine + phosphate = alpha-D-ribose 1-phosphate + guanine. The enzyme catalyses inosine + phosphate = alpha-D-ribose 1-phosphate + hypoxanthine. The catalysed reaction is thymidine + phosphate = 2-deoxy-alpha-D-ribose 1-phosphate + thymine. It catalyses the reaction uridine + phosphate = alpha-D-ribose 1-phosphate + uracil. It carries out the reaction xanthosine + phosphate = alpha-D-ribose 1-phosphate + xanthine. Catalyzes the phosphorolysis of diverse nucleosides, yielding D-ribose 1-phosphate and the respective free bases. Can use uridine, adenosine, guanosine, cytidine, thymidine, inosine and xanthosine as substrates. Also catalyzes the reverse reactions. This is Pyrimidine/purine nucleoside phosphorylase from Cupriavidus necator (strain ATCC 17699 / DSM 428 / KCTC 22496 / NCIMB 10442 / H16 / Stanier 337) (Ralstonia eutropha).